Here is a 398-residue protein sequence, read N- to C-terminus: Acetyl-CoA acetyltransferase erg10B, cytosolic (398 aa).

Cysteine 92 serves as the catalytic Acyl-thioester intermediate. Tyrosine 187 contacts K(+). Residues asparagine 229 and lysine 232 each coordinate CoA. The K(+) site is built by alanine 249, proline 250, and serine 252. Serine 253 contributes to the CoA binding site. A K(+)-binding site is contributed by valine 350. Active-site proton acceptor residues include histidine 354 and cysteine 384. Asparagine 385 provides a ligand contact to chloride.

Belongs to the thiolase-like superfamily. Thiolase family. Homotetramer. It depends on K(+) as a cofactor.

It is found in the cytoplasm. Its subcellular location is the cytosol. It carries out the reaction 2 acetyl-CoA = acetoacetyl-CoA + CoA. It functions in the pathway metabolic intermediate biosynthesis; (R)-mevalonate biosynthesis; (R)-mevalonate from acetyl-CoA: step 1/3. Its activity is regulated as follows. Activity is increased by monovalent cations such as K(+), Rb(+) or Cs(+). In terms of biological role, acetyl-CoA acetyltransferase; part of the first module of ergosterol biosynthesis pathway that includes the early steps of the pathway, conserved across all eukaryotes, and which results in the formation of mevalonate from acetyl-coenzyme A (acetyl-CoA). In this module, the cytosolic acetyl-CoA acetyltransferase erg10B catalyzes the formation of acetoacetyl-CoA. The hydroxymethylglutaryl-CoA synthases AFUA_8G07210 and AFUA_3G10660 then condense acetyl-CoA with acetoacetyl-CoA to form HMG-CoA. The rate-limiting step of the early module is the reduction to mevalonate by the 3-hydroxy-3-methylglutaryl-coenzyme A (HMG-CoA) reductases hmg1 and hmg2. Mevalonate is also a precursor for the extracellular siderophore triacetylfusarinine C (TAFC). In Aspergillus fumigatus (strain CBS 144.89 / FGSC A1163 / CEA10) (Neosartorya fumigata), this protein is Acetyl-CoA acetyltransferase erg10B, cytosolic.